Here is a 257-residue protein sequence, read N- to C-terminus: BTB/POZ domain-containing protein KCTD1 (257 aa).

The disordered stretch occupies residues 1–25 (MSRPLITRSPASPLNNQGIPTPAQL). Phosphoserine is present on residues S9 and S12. Polar residues predominate over residues 9–25 (SPASPLNNQGIPTPAQL). Residues 30–100 (APVHIDVGGH…LRTSKLLIPD (71 aa)) form the BTB domain.

Forms homopentamers. Interacts with KCTD15, probably forming heteropentamers depending on its abundance in a cell-type dependent manner. Interacts with TFAP2A, TFAP2B and TFAP2C via the BTB domain. Sumoylated.

It localises to the nucleus. Functionally, may repress the transcriptional activity of AP-2 family members, including TFAP2A, TFAP2B and TFAP2C to various extent. This chain is BTB/POZ domain-containing protein KCTD1 (Kctd1), found in Rattus norvegicus (Rat).